A 41-amino-acid chain; its full sequence is Large ribosomal subunit protein bL36 (41 aa).

The protein belongs to the bacterial ribosomal protein bL36 family.

The polypeptide is Large ribosomal subunit protein bL36 (Methylocella silvestris (strain DSM 15510 / CIP 108128 / LMG 27833 / NCIMB 13906 / BL2)).